The following is a 150-amino-acid chain: Molybdopterin synthase catalytic subunit (150 aa).

Substrate is bound by residues 34–36, threonine 44, 100–101, lysine 116, and 123–125; these read HVR, HR, and KKE.

Belongs to the MoaE family. In terms of assembly, heterotetramer of 2 MoaD subunits and 2 MoaE subunits. Also stable as homodimer. The enzyme changes between these two forms during catalysis.

The enzyme catalyses 2 [molybdopterin-synthase sulfur-carrier protein]-C-terminal-Gly-aminoethanethioate + cyclic pyranopterin phosphate + H2O = molybdopterin + 2 [molybdopterin-synthase sulfur-carrier protein]-C-terminal Gly-Gly + 2 H(+). It participates in cofactor biosynthesis; molybdopterin biosynthesis. Converts molybdopterin precursor Z into molybdopterin. This requires the incorporation of two sulfur atoms into precursor Z to generate a dithiolene group. The sulfur is provided by MoaD. The protein is Molybdopterin synthase catalytic subunit (moaE) of Staphylococcus epidermidis (strain ATCC 35984 / DSM 28319 / BCRC 17069 / CCUG 31568 / BM 3577 / RP62A).